Reading from the N-terminus, the 497-residue chain is Glycerol kinase (497 aa).

Residue threonine 21 coordinates ADP. ATP is bound by residues threonine 21 and threonine 22. Threonine 21 is a sn-glycerol 3-phosphate binding site. Arginine 25 is a binding site for ADP. Sn-glycerol 3-phosphate is bound by residues arginine 88, glutamate 89, tyrosine 140, and aspartate 244. The glycerol site is built by arginine 88, glutamate 89, tyrosine 140, aspartate 244, and glutamine 245. ADP-binding residues include threonine 266 and glycine 309. The ATP site is built by threonine 266, glycine 309, glutamine 313, and glycine 410. Positions 410 and 414 each coordinate ADP.

The protein belongs to the FGGY kinase family.

The catalysed reaction is glycerol + ATP = sn-glycerol 3-phosphate + ADP + H(+). Its pathway is polyol metabolism; glycerol degradation via glycerol kinase pathway; sn-glycerol 3-phosphate from glycerol: step 1/1. With respect to regulation, inhibited by fructose 1,6-bisphosphate (FBP). Functionally, key enzyme in the regulation of glycerol uptake and metabolism. Catalyzes the phosphorylation of glycerol to yield sn-glycerol 3-phosphate. In Gloeobacter violaceus (strain ATCC 29082 / PCC 7421), this protein is Glycerol kinase.